The chain runs to 495 residues: REST corepressor 3 (495 aa).

The 83-residue stretch at 1-83 folds into the ELM2 domain; it reads MRVGAEYQAR…KSLADLPNFT (83 aa). A Glycyl lysine isopeptide (Lys-Gly) (interchain with G-Cter in SUMO2) cross-link involves residue Lys20. The 52-residue stretch at 84-135 folds into the SANT 1 domain; sequence PFPDEWTVEDKVLFEQAFSFHGKSFHRIQQMLPDKTIASLVKYYYSWKKTRS. The tract at residues 147 to 219 is disordered; the sequence is LANRHNQGDS…SQRSKCRPPK (73 aa). Phosphoserine occurs at positions 156 and 171. Residues 162-184 are compositionally biased toward basic and acidic residues; it reads ETHPMDGNDSDYDPKKEAKKEGN. A Glycyl lysine isopeptide (Lys-Gly) (interchain with G-Cter in SUMO2) cross-link involves residue Lys193. The span at 205–217 shows a compositional bias: basic residues; it reads QHRHHSQRSKCRP. Positions 237–273 form a coiled coil; sequence AANTILRQLDMELISLKRQVQNAKQVNSALKQKMEGG. Lys285 participates in a covalent cross-link: Glycyl lysine isopeptide (Lys-Gly) (interchain with G-Cter in SUMO2). The SANT 2 domain occupies 285 to 336; that stretch reads KINARWTTEEQLLAVQGVRKYGKDFQAIADVIGNKTVGQVKNFFVNYRRRFN. The segment at 346–495 is disordered; it reads AEQGTQASNG…IQTDSQSSLH (150 aa). Over residues 348 to 357 the composition is skewed to polar residues; the sequence is QGTQASNGDA. Thr376 bears the Phosphothreonine mark. The segment covering 393–405 has biased composition (pro residues); the sequence is PSPPAPSSTPTPT. The segment covering 419–428 has biased composition (low complexity); sequence RPTLPAAPAL. Arg445 and Arg457 each carry asymmetric dimethylarginine. A compositionally biased stretch (polar residues) spans 475-495; that stretch reads VGGQQPPSLIGIQTDSQSSLH.

It belongs to the CoREST family.

Its subcellular location is the nucleus. Functionally, may act as a component of a corepressor complex that represses transcription. This Homo sapiens (Human) protein is REST corepressor 3 (RCOR3).